Consider the following 152-residue polypeptide: Putative NrdI-like protein (152 aa).

It belongs to the NrdI family.

This Streptococcus pyogenes serotype M18 (strain MGAS8232) protein is Putative NrdI-like protein.